The sequence spans 227 residues: Isopentenyl-diphosphate Delta-isomerase 1 (227 aa).

Residue K36 coordinates substrate. Residues H40 and H51 each contribute to the Mg(2+) site. A Nudix hydrolase domain is found at 49-199 (LLHRAFSVFL…EIKITPWFQI (151 aa)). The substrate site is built by R70 and K74. The active site involves C86. Residue S87 coordinates substrate. Mg(2+) is bound by residues E146 and E148. The active site involves E148. K176 is modified (N6-acetyllysine). A Microbody targeting signal motif is present at residues 225 to 227 (HRM).

The protein belongs to the IPP isomerase type 1 family. As to quaternary structure, monomer. Mg(2+) is required as a cofactor.

The protein localises to the peroxisome. It carries out the reaction isopentenyl diphosphate = dimethylallyl diphosphate. Its pathway is isoprenoid biosynthesis; dimethylallyl diphosphate biosynthesis; dimethylallyl diphosphate from isopentenyl diphosphate: step 1/1. In terms of biological role, catalyzes the 1,3-allylic rearrangement of the homoallylic substrate isopentenyl (IPP) to its highly electrophilic allylic isomer, dimethylallyl diphosphate (DMAPP). The chain is Isopentenyl-diphosphate Delta-isomerase 1 (IDI1) from Macaca fascicularis (Crab-eating macaque).